The chain runs to 167 residues: Thioredoxin Y2, chloroplastic (167 aa).

A chloroplast-targeting transit peptide spans Met1–Arg58. One can recognise a Thioredoxin domain in the interval Ala59–Gln164. Active-site nucleophile residues include Cys88 and Cys91. Cys88 and Cys91 are joined by a disulfide.

This sequence belongs to the thioredoxin family. Plant Y-type subfamily. In terms of tissue distribution, expressed in leaves.

It is found in the plastid. The protein localises to the chloroplast stroma. Thiol-disulfide oxidoreductase that poorly activates chloroplastic malate dehydrogenase (NADP-MDH) and fructose-1,6-bisphosphatase. Provides reducing equivalents for peroxiredoxin Q. This Arabidopsis thaliana (Mouse-ear cress) protein is Thioredoxin Y2, chloroplastic.